The primary structure comprises 383 residues: Gap junction alpha-1 protein (383 aa).

Topologically, residues 2 to 23 (GDWSALGKLLDKVQAYSTAGGK) are cytoplasmic. A Phosphoserine modification is found at S5. Residues 24–44 (VWLSVLFIFRILLLGTAVESA) traverse the membrane as a helical segment. Residues 45–76 (WGDEQSAFRCNTQQPGCENVCYDKSFPISHVR) are Extracellular-facing. Cystine bridges form between C54–C193 and C188–C199. A helical membrane pass occupies residues 77-97 (FWVLQIIFVSVPTLLYLAHVF). Topologically, residues 98-156 (YVMRKEEKLNKKEEELKVVAQTDGANVDMHLKQIEIKKFKYGIEEHGKVKMRGGLLRTY) are cytoplasmic. Residue K145 forms a Glycyl lysine isopeptide (Lys-Gly) (interchain with G-Cter in SUMO) linkage. A helical transmembrane segment spans residues 157 to 177 (IISILFKSVFEVAFLLIQWYI). The Extracellular portion of the chain corresponds to 178–208 (YGFSLSAVYTCKRDPCPHQVDCFLSRPTEKT). Residues 209 to 229 (IFIIFMLVVSLVSLALNIIEL) traverse the membrane as a helical segment. The Cytoplasmic portion of the chain corresponds to 230–383 (FYVFFKGVKD…SRPRPDDLEI (154 aa)). A Glycyl lysine isopeptide (Lys-Gly) (interchain with G-Cter in SUMO) cross-link involves residue K238. Residues 245–383 (SDPYHTTTGP…SRPRPDDLEI (139 aa)) form an interaction with NOV region. Y248 is modified (phosphotyrosine). Phosphoserine is present on residues S256, S258, and S263. The interaction with UBQLN4 stretch occupies residues 265 to 383 (KYAYFNGCSS…SRPRPDDLEI (119 aa)). C272 is modified (S-nitrosocysteine). Position 276 is a phosphothreonine (T276). S307 and S315 each carry phosphoserine. A compositionally biased stretch (polar residues) spans 318 to 333 (QNRMGQAGSTISNSHA). The segment at 318 to 383 (QNRMGQAGST…SRPRPDDLEI (66 aa)) is disordered. Position 326 is a phosphoserine; by CK1 (S326). At T327 the chain carries Phosphothreonine. Phosphoserine; by CK1 is present on residues S329 and S331. Basic and acidic residues predominate over residues 339-352 (PDDHQNSKKLDAGH). A phosphoserine mark is found at S345 and S366. Low complexity predominate over residues 363–375 (RPSSRASSRASSR). Residue S369 is modified to Phosphoserine; by PKC/PRKCG and PKC/PRKCD. Phosphoserine is present on residues S370 and S374.

This sequence belongs to the connexin family. Alpha-type (group II) subfamily. As to quaternary structure, a connexon is composed of a hexamer of connexins. Interacts with SGSM3. Interacts with RIC1/CIP150. Interacts with CNST and CSNK1D. Interacts (via C-terminus) with TJP1. Interacts (via C-terminus) with SRC (via SH3 domain). Interacts (not ubiquitinated) with UBQLN4 (via UBA domain). Interacts with NOV. Interacts with TMEM65. Interacts with ANK3/ANKG and PKP2. Phosphorylation at Ser-326, Ser-329 and Ser-331 by CK1 modulates gap junction assembly. Phosphorylated at Ser-369 by PRKCG; phosphorylation induces disassembly of gap junction plaques and inhibition of gap junction activity. Phosphorylation at Ser-369 by PRKCD triggers its internalization into small vesicles leading to proteasome-mediated degradation. In terms of processing, sumoylated with SUMO1, SUMO2 and SUMO3, which may regulate the level of functional Cx43 gap junctions at the plasma membrane. May be desumoylated by SENP1 or SENP2. Post-translationally, acetylated in the developing cortex; leading to delocalization from the cell membrane.

It is found in the cell membrane. Its subcellular location is the cell junction. The protein localises to the gap junction. It localises to the endoplasmic reticulum. Its function is as follows. Gap junction protein that acts as a regulator of bladder capacity. A gap junction consists of a cluster of closely packed pairs of transmembrane channels, the connexons, through which materials of low MW diffuse from one cell to a neighboring cell. May play a critical role in the physiology of hearing by participating in the recycling of potassium to the cochlear endolymph. Negative regulator of bladder functional capacity: acts by enhancing intercellular electrical and chemical transmission, thus sensitizing bladder muscles to cholinergic neural stimuli and causing them to contract. May play a role in cell growth inhibition through the regulation of NOV expression and localization. Plays an essential role in gap junction communication in the ventricles. In Bos taurus (Bovine), this protein is Gap junction alpha-1 protein (GJA1).